Here is a 427-residue protein sequence, read N- to C-terminus: Nucleolar and spindle-associated protein 1 (427 aa).

Positions 41–190 (AHLNPETRKE…LGNNKRTSAT (150 aa)) are disordered. Over residues 43 to 55 (LNPETRKENKNQD) the composition is skewed to basic and acidic residues. The span at 83–96 (TKTRRRRRKKHKTI) shows a compositional bias: basic residues. Residues 119-128 (NFQNQENQEN) are compositionally biased toward low complexity. The residue at position 139 (serine 139) is a Phosphoserine. Basic and acidic residues predominate over residues 159–179 (NDIKDSKKPLEKRSLCTDEFS). Polar residues predominate over residues 181–190 (LGNNKRTSAT). Threonine 191 carries the post-translational modification Phosphothreonine. Positions 235–312 (IVTPVPPRGR…QAVFRTPKSK (78 aa)) are disordered. The interval 243–367 (GRLSVPCTPA…HKGKLKPWGQ (125 aa)) is interaction with microtubules. Serine 246 bears the Phosphoserine mark. Position 250 is a phosphothreonine (threonine 250). Over residues 252–264 (ARQQCPQGHSATK) the composition is skewed to polar residues. Position 261 is a phosphoserine (serine 261). Phosphothreonine occurs at positions 323 and 334. A phosphoserine mark is found at serine 337 and serine 348. Residues 354 to 427 (NYKPHKGKLK…RRNLGVTKAQ (74 aa)) are disordered. A KEN box motif is present at residues 369 to 375 (KENNSLN). Residues 393–425 (LQTREERWKRQEQERKEKKEKLLEARRNLGVTK) are a coiled coil. The segment covering 394-419 (QTREERWKRQEQERKEKKEKLLEARR) has biased composition (basic and acidic residues).

The protein belongs to the NUSAP family. In terms of assembly, interacts with DNA and microtubules. Microtubule bundling is inhibited by IPO7, KPNA2 and KPNB1 while association with DNA is also inhibited by IPO7 and KPNA2. Post-translationally, ubiquitinated. Ubiquitination by FZR1 may lead to proteasome-dependent degradation of this protein.

It is found in the cytoplasm. Its subcellular location is the nucleus. The protein resides in the nucleolus. The protein localises to the cytoskeleton. It localises to the spindle. It is found in the chromosome. Its function is as follows. Microtubule-associated protein with the capacity to bundle and stabilize microtubules. May associate with chromosomes and promote the organization of mitotic spindle microtubules around them. The chain is Nucleolar and spindle-associated protein 1 (Nusap1) from Mus musculus (Mouse).